Consider the following 1117-residue polypeptide: DNA polymerase II large subunit (1117 aa).

Residues 279-294 (STKEEEKKKEESSENK) are compositionally biased toward basic and acidic residues. Residues 279–299 (STKEEEKKKEESSENKPKKKA) are disordered.

This sequence belongs to the archaeal DNA polymerase II family. Heterodimer of a large subunit and a small subunit.

The enzyme catalyses DNA(n) + a 2'-deoxyribonucleoside 5'-triphosphate = DNA(n+1) + diphosphate. The catalysed reaction is Exonucleolytic cleavage in the 3'- to 5'-direction to yield nucleoside 5'-phosphates.. In terms of biological role, possesses two activities: a DNA synthesis (polymerase) and an exonucleolytic activity that degrades single-stranded DNA in the 3'- to 5'-direction. Has a template-primer preference which is characteristic of a replicative DNA polymerase. The protein is DNA polymerase II large subunit of Methanosphaera stadtmanae (strain ATCC 43021 / DSM 3091 / JCM 11832 / MCB-3).